The chain runs to 87 residues: MANIKSAKKRAVQSEKRRKHNASRRSMMRTFIKKVYAAIATGDKEVAQKAFNDMQPIVDRQAGKGLIHKNKAARHKSNLVARINAMQ.

The tract at residues Met-1–Met-27 is disordered.

The protein belongs to the bacterial ribosomal protein bS20 family.

Functionally, binds directly to 16S ribosomal RNA. The chain is Small ribosomal subunit protein bS20 from Pectobacterium carotovorum subsp. carotovorum (strain PC1).